The sequence spans 241 residues: Ubiquinone biosynthesis O-methyltransferase (241 aa).

4 residues coordinate S-adenosyl-L-methionine: Arg46, Gly66, Asp87, and Met131.

The protein belongs to the methyltransferase superfamily. UbiG/COQ3 family.

The catalysed reaction is a 3-demethylubiquinol + S-adenosyl-L-methionine = a ubiquinol + S-adenosyl-L-homocysteine + H(+). It carries out the reaction a 3-(all-trans-polyprenyl)benzene-1,2-diol + S-adenosyl-L-methionine = a 2-methoxy-6-(all-trans-polyprenyl)phenol + S-adenosyl-L-homocysteine + H(+). The protein operates within cofactor biosynthesis; ubiquinone biosynthesis. O-methyltransferase that catalyzes the 2 O-methylation steps in the ubiquinone biosynthetic pathway. This Bordetella parapertussis (strain 12822 / ATCC BAA-587 / NCTC 13253) protein is Ubiquinone biosynthesis O-methyltransferase.